The chain runs to 432 residues: Putative D-alanyl-D-alanine carboxypeptidase (432 aa).

A helical; Signal-anchor transmembrane segment spans residues 7–25 (ATVLLTFSLSAFAVEYPVL).

This sequence belongs to the peptidase S12 family. YfeW subfamily.

The protein resides in the cell inner membrane. The enzyme catalyses Preferential cleavage: (Ac)2-L-Lys-D-Ala-|-D-Ala. Also transpeptidation of peptidyl-alanyl moieties that are N-acyl substituents of D-alanine.. The sequence is that of Putative D-alanyl-D-alanine carboxypeptidase from Salmonella schwarzengrund (strain CVM19633).